The primary structure comprises 479 residues: RAC-gamma serine/threonine-protein kinase (479 aa).

Ser2 is modified (N-acetylserine). A PH domain is found at 5–107 (TIVKEGWVQK…WTEAIQAVAD (103 aa)). Cys59 and Cys76 are disulfide-bonded. The Protein kinase domain maps to 148-405 (FDYLKLLGKG…AKEIMRHSFF (258 aa)). ATP is bound by residues 154–162 (LGKGTFGKV) and Lys177. Asp271 acts as the Proton acceptor in catalysis. Cys293 and Cys307 are oxidised to a cystine. Thr302 carries O-linked (GlcNAc) threonine glycosylation. The residue at position 305 (Thr305) is a Phosphothreonine; by PDPK1. Thr309 is a glycosylation site (O-linked (GlcNAc) threonine). In terms of domain architecture, AGC-kinase C-terminal spans 406-479 (SGVNWQDVYD…QFSYSASGRE (74 aa)). Residues 445 to 479 (TITPPEKYDDDGMDGMDNERRPHFPQFSYSASGRE) form a disordered region. Thr447 bears the Phosphothreonine mark. At Ser472 the chain carries Phosphoserine; by PKC/PRKCZ. The O-linked (GlcNAc) serine; alternate glycan is linked to Ser472.

This sequence belongs to the protein kinase superfamily. AGC Ser/Thr protein kinase family. RAC subfamily. Interacts (via PH domain) with TCL1A; this enhances AKT3 phosphorylation and activation. Interacts with TRAF6. Interacts with KCTD20. Interacts with BTBD10. Phosphorylation on Thr-305 and Ser-472 is required for full activity. Phosphorylation of the activation loop at Thr-305 by PDPK1/PDK1 is a prerequisite for full activation. Phosphorylation at Ser-472 by mTORC2 in response to growth factors plays a key role in AKT1 activation by facilitating subsequent phosphorylation of the activation loop by PDPK1/PDK1. Post-translationally, ubiquitinated. When fully phosphorylated and translocated into the nucleus, undergoes 'Lys-48'-polyubiquitination catalyzed by TTC3, leading to its degradation by the proteasome. In terms of processing, O-GlcNAcylation at Thr-302 and Thr-309 inhibits activating phosphorylation at Thr-305 via disrupting the interaction between AKT and PDPK1/PDK1. In terms of tissue distribution, isoform 1 is expressed in prostate, testis, uterus and mammary gland and isoform 2 is expressed in prostate, testis and mammary gland.

It localises to the nucleus. The protein resides in the cytoplasm. Its subcellular location is the membrane. The catalysed reaction is L-seryl-[protein] + ATP = O-phospho-L-seryl-[protein] + ADP + H(+). It catalyses the reaction L-threonyl-[protein] + ATP = O-phospho-L-threonyl-[protein] + ADP + H(+). With respect to regulation, two specific sites, one in the kinase domain (Thr-305) and the other in the C-terminal regulatory region (Ser-472), need to be phosphorylated for its full activation. IGF-1 leads to the activation of AKT3, which may play a role in regulating cell survival. Functionally, AKT3 is one of 3 closely related serine/threonine-protein kinases (AKT1, AKT2 and AKT3) called the AKT kinase, and which regulate many processes including metabolism, proliferation, cell survival, growth and angiogenesis. This is mediated through serine and/or threonine phosphorylation of a range of downstream substrates. Over 100 substrate candidates have been reported so far, but for most of them, no isoform specificity has been reported. AKT3 is the least studied AKT isoform. It plays an important role in brain development and is crucial for the viability of malignant glioma cells. AKT3 isoform may also be the key molecule in up-regulation and down-regulation of MMP13 via IL13. Required for the coordination of mitochondrial biogenesis with growth factor-induced increases in cellular energy demands. Down-regulation by RNA interference reduces the expression of the phosphorylated form of BAD, resulting in the induction of caspase-dependent apoptosis. The polypeptide is RAC-gamma serine/threonine-protein kinase (Akt3) (Mus musculus (Mouse)).